Here is a 408-residue protein sequence, read N- to C-terminus: Histidine--tRNA ligase (408 aa).

This sequence belongs to the class-II aminoacyl-tRNA synthetase family.

The protein localises to the cytoplasm. It carries out the reaction tRNA(His) + L-histidine + ATP = L-histidyl-tRNA(His) + AMP + diphosphate + H(+). This chain is Histidine--tRNA ligase, found in Methanospirillum hungatei JF-1 (strain ATCC 27890 / DSM 864 / NBRC 100397 / JF-1).